Consider the following 206-residue polypeptide: Peroxynitrite isomerase (206 aa).

The GXWXGXG signature appears at 21 to 27 (GTWEGNG). A heme b-binding site is contributed by histidine 190.

It belongs to the nitrobindin family. Homodimer. Heme b serves as cofactor.

The enzyme catalyses peroxynitrite = nitrate. It participates in nitrogen metabolism. In terms of biological role, heme-binding protein able to scavenge peroxynitrite and to protect free L-tyrosine against peroxynitrite-mediated nitration, by acting as a peroxynitrite isomerase that converts peroxynitrite to nitrate. Therefore, this protein likely plays a role in peroxynitrite sensing and in the detoxification of reactive nitrogen and oxygen species (RNS and ROS, respectively). Is able to bind nitric oxide (NO) in vitro, but may act as a sensor of peroxynitrite levels in vivo. The chain is Peroxynitrite isomerase from Kocuria rhizophila (strain ATCC 9341 / DSM 348 / NBRC 103217 / DC2201).